Here is a 386-residue protein sequence, read N- to C-terminus: FHA domain-containing protein At4g14490 (386 aa).

One can recognise an FHA domain in the interval 28 to 78 (IRVGRIVRGNEIAIKDAGISTKHLRIESDSGNWVIQDLGSSNGTLLNSNAL). A disordered region spans residues 286 to 311 (KNKGKNKKADQKPLKSFENDEVTDSG). Basic and acidic residues predominate over residues 292 to 303 (KKADQKPLKSFE).

This chain is FHA domain-containing protein At4g14490, found in Arabidopsis thaliana (Mouse-ear cress).